We begin with the raw amino-acid sequence, 546 residues long: CTP synthase (546 aa).

The segment at 1–269 (MADTKYIFVT…DKVTLKKLAL (269 aa)) is amidoligase domain. Residue serine 15 participates in CTP binding. UTP is bound at residue serine 15. ATP is bound at residue 16 to 21 (SLGKGI). Tyrosine 56 contacts L-glutamine. ATP is bound at residue aspartate 73. Aspartate 73 and glutamate 143 together coordinate Mg(2+). CTP contacts are provided by residues 150-152 (DIE), 190-195 (KTKPTQ), and lysine 226. Residues 190–195 (KTKPTQ) and lysine 226 each bind UTP. One can recognise a Glutamine amidotransferase type-1 domain in the interval 295 to 537 (HIGLIGKYVE…VKAAHEHSVK (243 aa)). Glycine 357 is an L-glutamine binding site. The Nucleophile; for glutamine hydrolysis role is filled by cysteine 384. L-glutamine-binding positions include 385–388 (LGMQ), glutamate 408, and arginine 465. Residues histidine 510 and glutamate 512 contribute to the active site.

Belongs to the CTP synthase family. As to quaternary structure, homotetramer.

The catalysed reaction is UTP + L-glutamine + ATP + H2O = CTP + L-glutamate + ADP + phosphate + 2 H(+). The enzyme catalyses L-glutamine + H2O = L-glutamate + NH4(+). It catalyses the reaction UTP + NH4(+) + ATP = CTP + ADP + phosphate + 2 H(+). It participates in pyrimidine metabolism; CTP biosynthesis via de novo pathway; CTP from UDP: step 2/2. Its activity is regulated as follows. Allosterically activated by GTP, when glutamine is the substrate; GTP has no effect on the reaction when ammonia is the substrate. The allosteric effector GTP functions by stabilizing the protein conformation that binds the tetrahedral intermediate(s) formed during glutamine hydrolysis. Inhibited by the product CTP, via allosteric rather than competitive inhibition. Its function is as follows. Catalyzes the ATP-dependent amination of UTP to CTP with either L-glutamine or ammonia as the source of nitrogen. Regulates intracellular CTP levels through interactions with the four ribonucleotide triphosphates. The sequence is that of CTP synthase from Christiangramia forsetii (strain DSM 17595 / CGMCC 1.15422 / KT0803) (Gramella forsetii).